The sequence spans 618 residues: Beta-xylosidase (618 aa).

Disordered regions lie at residues 76–100 (ERDRYTTDESDSGSSERHSVQQEES) and 463–509 (LEPQ…PPIQ).

It belongs to the glycosyl hydrolase 52 family.

It is found in the secreted. The enzyme catalyses Hydrolysis of (1-&gt;4)-beta-D-xylans, to remove successive D-xylose residues from the non-reducing termini.. The protein operates within glycan degradation; xylan degradation. This chain is Beta-xylosidase (xylA), found in Geobacillus stearothermophilus (Bacillus stearothermophilus).